The following is a 152-amino-acid chain: Nucleoside diphosphate kinase (152 aa).

Residues Lys10, Phe58, Arg86, Thr92, Arg103, and Asn113 each contribute to the ATP site. His116 (pros-phosphohistidine intermediate) is an active-site residue.

It belongs to the NDK family. Mg(2+) is required as a cofactor.

Its subcellular location is the cytoplasm. The catalysed reaction is a 2'-deoxyribonucleoside 5'-diphosphate + ATP = a 2'-deoxyribonucleoside 5'-triphosphate + ADP. The enzyme catalyses a ribonucleoside 5'-diphosphate + ATP = a ribonucleoside 5'-triphosphate + ADP. Major role in the synthesis of nucleoside triphosphates other than ATP. The ATP gamma phosphate is transferred to the NDP beta phosphate via a ping-pong mechanism, using a phosphorylated active-site intermediate. The protein is Nucleoside diphosphate kinase of Methanosphaera stadtmanae (strain ATCC 43021 / DSM 3091 / JCM 11832 / MCB-3).